We begin with the raw amino-acid sequence, 124 residues long: ATP synthase epsilon chain (124 aa).

Residues 97-124 (ARVREASSEEEKSRAESELRAVKRSKEK) are disordered.

Belongs to the ATPase epsilon chain family. As to quaternary structure, F-type ATPases have 2 components, CF(1) - the catalytic core - and CF(0) - the membrane proton channel. CF(1) has five subunits: alpha(3), beta(3), gamma(1), delta(1), epsilon(1). CF(0) has three main subunits: a, b and c.

The protein localises to the cell membrane. Produces ATP from ADP in the presence of a proton gradient across the membrane. This is ATP synthase epsilon chain from Corynebacterium urealyticum (strain ATCC 43042 / DSM 7109).